Reading from the N-terminus, the 388-residue chain is Tryptophan synthase beta chain 1 (388 aa).

K82 is modified (N6-(pyridoxal phosphate)lysine).

Belongs to the TrpB family. As to quaternary structure, tetramer of two alpha and two beta chains. It depends on pyridoxal 5'-phosphate as a cofactor.

The enzyme catalyses (1S,2R)-1-C-(indol-3-yl)glycerol 3-phosphate + L-serine = D-glyceraldehyde 3-phosphate + L-tryptophan + H2O. It functions in the pathway amino-acid biosynthesis; L-tryptophan biosynthesis; L-tryptophan from chorismate: step 5/5. In terms of biological role, the beta subunit is responsible for the synthesis of L-tryptophan from indole and L-serine. In Pyrococcus abyssi (strain GE5 / Orsay), this protein is Tryptophan synthase beta chain 1 (trpB1).